The sequence spans 149 residues: Macrodomain Ter protein (149 aa).

The protein belongs to the MatP family. Homodimer.

Its subcellular location is the cytoplasm. Functionally, required for spatial organization of the terminus region of the chromosome (Ter macrodomain) during the cell cycle. Prevents early segregation of duplicated Ter macrodomains during cell division. Binds specifically to matS, which is a 13 bp signature motif repeated within the Ter macrodomain. This Vibrio campbellii (strain ATCC BAA-1116) protein is Macrodomain Ter protein.